The primary structure comprises 137 residues: Putative pre-16S rRNA nuclease (137 aa).

Belongs to the YqgF nuclease family.

It is found in the cytoplasm. Could be a nuclease involved in processing of the 5'-end of pre-16S rRNA. This chain is Putative pre-16S rRNA nuclease, found in Anaeromyxobacter sp. (strain Fw109-5).